Here is a 171-residue protein sequence, read N- to C-terminus: Protein-export protein SecB (171 aa).

Belongs to the SecB family. In terms of assembly, homotetramer, a dimer of dimers. One homotetramer interacts with 1 SecA dimer.

The protein resides in the cytoplasm. Functionally, one of the proteins required for the normal export of preproteins out of the cell cytoplasm. It is a molecular chaperone that binds to a subset of precursor proteins, maintaining them in a translocation-competent state. It also specifically binds to its receptor SecA. The sequence is that of Protein-export protein SecB from Granulibacter bethesdensis (strain ATCC BAA-1260 / CGDNIH1).